A 318-amino-acid polypeptide reads, in one-letter code: Homoserine kinase (318 aa).

97-107 (PIGSGLGSSAC) is a binding site for ATP.

This sequence belongs to the GHMP kinase family. Homoserine kinase subfamily.

Its subcellular location is the cytoplasm. It catalyses the reaction L-homoserine + ATP = O-phospho-L-homoserine + ADP + H(+). Its pathway is amino-acid biosynthesis; L-threonine biosynthesis; L-threonine from L-aspartate: step 4/5. Its function is as follows. Catalyzes the ATP-dependent phosphorylation of L-homoserine to L-homoserine phosphate. This is Homoserine kinase from Vibrio parahaemolyticus serotype O3:K6 (strain RIMD 2210633).